Here is a 348-residue protein sequence, read N- to C-terminus: Endoglucanase-6B (348 aa).

The substrate site is built by Trp52 and Ser54. Catalysis depends on proton donor residues Asp92 and Asp139. Substrate is bound by residues Asn183, Trp186, Asn222, Trp282, Lys310, and Glu314. Low complexity predominate over residues 222–241 (NYNPYSTSNPPPYTSGSPSP). The disordered stretch occupies residues 222 to 244 (NYNPYSTSNPPPYTSGSPSPDES).

Belongs to the glycosyl hydrolase 6 (cellulase B) family. In terms of assembly, monomer.

It catalyses the reaction Endohydrolysis of (1-&gt;4)-beta-D-glucosidic linkages in cellulose, lichenin and cereal beta-D-glucans.. Functionally, plays a central role in the recycling of plant biomass. The biological conversion of cellulose to glucose generally requires three types of hydrolytic enzymes: (1) Endoglucanases which cut internal beta-1,4-glucosidic bonds; (2) Exocellobiohydrolases that cut the disaccharide cellobiose from the non-reducing end of the cellulose polymer chain; (3) Beta-1,4-glucosidases which hydrolyze the cellobiose and other short cello-oligosaccharides to glucose. This chain is Endoglucanase-6B, found in Humicola insolens (Soft-rot fungus).